We begin with the raw amino-acid sequence, 196 residues long: DnaA initiator-associating protein DiaA (196 aa).

Positions 34–196 (LVHSLLNGNK…DNTLFLHQDD (163 aa)) constitute an SIS domain.

This sequence belongs to the SIS family. DiaA subfamily. In terms of assembly, homotetramer; dimer of dimers.

Required for the timely initiation of chromosomal replication via direct interactions with the DnaA initiator protein. The polypeptide is DnaA initiator-associating protein DiaA (Salmonella paratyphi A (strain ATCC 9150 / SARB42)).